A 215-amino-acid chain; its full sequence is Cytochrome b6 (215 aa).

The helical transmembrane segment at 32 to 52 threads the bilayer; that stretch reads IFYCLGGITLTCFLVQVATGF. A heme c-binding site is contributed by Cys35. 2 residues coordinate heme b: His86 and His100. 3 helical membrane-spanning segments follow: residues 90-110, 116-136, and 186-206; these read ASMM…TGGF, LTWV…VTGY, and LHTF…FLMI. His187 and His202 together coordinate heme b.

This sequence belongs to the cytochrome b family. PetB subfamily. As to quaternary structure, the 4 large subunits of the cytochrome b6-f complex are cytochrome b6, subunit IV (17 kDa polypeptide, PetD), cytochrome f and the Rieske protein, while the 4 small subunits are PetG, PetL, PetM and PetN. The complex functions as a dimer. It depends on heme b as a cofactor. Heme c is required as a cofactor.

It is found in the plastid. Its subcellular location is the chloroplast thylakoid membrane. Component of the cytochrome b6-f complex, which mediates electron transfer between photosystem II (PSII) and photosystem I (PSI), cyclic electron flow around PSI, and state transitions. This is Cytochrome b6 from Eucalyptus globulus subsp. globulus (Tasmanian blue gum).